Consider the following 60-residue polypeptide: Large ribosomal subunit protein bL32 (60 aa).

The protein belongs to the bacterial ribosomal protein bL32 family.

The polypeptide is Large ribosomal subunit protein bL32 (Streptococcus equi subsp. zooepidemicus (strain MGCS10565)).